Consider the following 393-residue polypeptide: Protein TsgA (393 aa).

12 helical membrane-spanning segments follow: residues 11 to 31 (WISF…GMVM), 51 to 71 (FLNA…EIVP), 78 to 98 (FGFL…SLAL), 101 to 121 (TAMF…TFLI), 134 to 154 (LLFT…IAAF), 162 to 182 (WYWV…LTFG), 206 to 226 (IGVL…LGFI), 245 to 265 (TLVS…SFIL), 273 to 293 (ILTV…TGTP), 297 to 317 (AWSI…IITL), 332 to 352 (FVLT…GPIV), and 361 to 381 (LLTA…LGFV).

The protein belongs to the major facilitator superfamily. TsgA family.

The protein resides in the cell inner membrane. This is Protein TsgA from Shigella boydii serotype 4 (strain Sb227).